The chain runs to 338 residues: 1-aminocyclopropane-1-carboxylate deaminase (338 aa).

Lys51 carries the post-translational modification N6-(pyridoxal phosphate)lysine. Ser78 acts as the Nucleophile in catalysis.

Belongs to the ACC deaminase/D-cysteine desulfhydrase family. In terms of assembly, homotrimer. It depends on pyridoxal 5'-phosphate as a cofactor.

It carries out the reaction 1-aminocyclopropane-1-carboxylate + H2O = 2-oxobutanoate + NH4(+). Catalyzes a cyclopropane ring-opening reaction, the irreversible conversion of 1-aminocyclopropane-1-carboxylate (ACC) to ammonia and alpha-ketobutyrate. Allows growth on ACC as a nitrogen source. This Burkholderia orbicola (strain MC0-3) protein is 1-aminocyclopropane-1-carboxylate deaminase.